The following is a 493-amino-acid chain: MERAEEPVVYQKLLPWEPSLESEEEVEEEETSEALVLNPRRHQDSSRNKAGGLPGTWARVVAALLLLAVGCSLAVRQLQNQGRSTGSLGSVAPPPGGHSHGPGVYHHGAIISPAGRELLVAGGNVVDAGVGAALCLAVVHPHATGLGAMFWGLFHDSSSGNSTALTSGPAQTLAPGLGLPAALPTLHLLHARFGRLPWPRLLVGPTTLAQEGFLVDTPLARALVARGTEGLCPLLCHADGTPLGAGARATNPQLAAVLRSAALAPTSDLAGDALLSLLAGDLGVEVPSAVPRPTLEPAEQLPVPQGILFTTPSPSAGPELLALLEAALRSGAPIPDPCPPFLQTAVSPESSALAAVDSSGSVLLLTSSLNCSFGSAHLSPSTGVLLSNLVAKSTTSAWACPLILRGSLDDTEADVLGLVASGTPDVARAMTHTLLRHLAARPPTQAQHQHQGQQEPTEHPSTCGQGTLLQVAAHTEHAHVSSVPHACCPFQGF.

Topologically, residues 1-54 are cytoplasmic; the sequence is MERAEEPVVYQKLLPWEPSLESEEEVEEEETSEALVLNPRRHQDSSRNKAGGLP. The interval 19-52 is disordered; it reads SLESEEEVEEEETSEALVLNPRRHQDSSRNKAGG. The segment covering 20–32 has biased composition (acidic residues); that stretch reads LESEEEVEEEETS. A helical; Signal-anchor for type II membrane protein membrane pass occupies residues 55–75; sequence GTWARVVAALLLLAVGCSLAV. Residues 76–493 lie on the Extracellular side of the membrane; it reads RQLQNQGRST…PHACCPFQGF (418 aa). The interval 83-105 is disordered; that stretch reads RSTGSLGSVAPPPGGHSHGPGVY. N-linked (GlcNAc...) asparagine glycans are attached at residues N161 and N370. Over residues 442-455 the composition is skewed to low complexity; that stretch reads PPTQAQHQHQGQQE. The tract at residues 442–464 is disordered; that stretch reads PPTQAQHQHQGQQEPTEHPSTCG.

The protein belongs to the gamma-glutamyltransferase family. As to quaternary structure, heterodimer composed of the light and heavy chains. The active site is located in the light chain. Post-translationally, cleaved by autocatalysis into a large and a small subunit and the autocatalytic cleavage is essential to the functional activation of the enzyme.

The protein resides in the membrane. It catalyses the reaction an N-terminal (5-L-glutamyl)-[peptide] + an alpha-amino acid = 5-L-glutamyl amino acid + an N-terminal L-alpha-aminoacyl-[peptide]. It carries out the reaction glutathione + H2O = L-cysteinylglycine + L-glutamate. The catalysed reaction is an S-substituted glutathione + H2O = an S-substituted L-cysteinylglycine + L-glutamate. It functions in the pathway sulfur metabolism; glutathione metabolism. In terms of biological role, hydrolyzes and transfers gamma-glutamyl moieties from glutathione and other gamma-glutamyl compounds to acceptors. The protein is Glutathione hydrolase 6 of Homo sapiens (Human).